The chain runs to 213 residues: Glycerol-3-phosphate acyltransferase (213 aa).

Transmembrane regions (helical) follow at residues 2-22 (ITIV…GLWI), 52-74 (AGMA…PIIF), 81-100 (PLIF…FAGF), 112-132 (VIFG…FGAL), 143-163 (VTAS…GFIL), and 164-184 (SNYD…IIIR).

It belongs to the PlsY family. In terms of assembly, probably interacts with PlsX.

It is found in the cell membrane. The enzyme catalyses an acyl phosphate + sn-glycerol 3-phosphate = a 1-acyl-sn-glycero-3-phosphate + phosphate. The protein operates within lipid metabolism; phospholipid metabolism. Functionally, catalyzes the transfer of an acyl group from acyl-phosphate (acyl-PO(4)) to glycerol-3-phosphate (G3P) to form lysophosphatidic acid (LPA). This enzyme utilizes acyl-phosphate as fatty acyl donor, but not acyl-CoA or acyl-ACP. This chain is Glycerol-3-phosphate acyltransferase, found in Streptococcus pneumoniae (strain CGSP14).